Here is a 1575-residue protein sequence, read N- to C-terminus: Ras GTPase-activating-like protein IQGAP2 (1575 aa).

At S16 the chain carries Phosphoserine. The Calponin-homology (CH) domain occupies 41 to 156 (LCHLEEAKRW…YCIHALSLYL (116 aa)). At T356 the chain carries Phosphothreonine. The WW domain occupies 594-627 (ESSEGSWVTLNVQEKYNYYYNTDSKEGSWVPPEL). S595 and S599 each carry phosphoserine. 3 IQ domains span residues 690-719 (QTESVVKIQAFWKGFKQRQEYLHRQQVFAG), 720-749 (NVDSVVKIQSWFRMVTARKSYLSRLRYFED), and 750-779 (HKNEIVKIQSLLRASKARDDYKALVGSENP). Residues T782, T881, T1002, and T1269 each carry the phosphothreonine modification. In terms of domain architecture, Ras-GAP spans 933–1182 (YLLLKLFKTA…QEFRKYFQEA (250 aa)). Residues S1279 and S1461 each carry the phosphoserine modification.

Functionally, binds to activated CDC42 and RAC1 but does not seem to stimulate their GTPase activity. Associates with calmodulin. This is Ras GTPase-activating-like protein IQGAP2 (Iqgap2) from Mus musculus (Mouse).